The sequence spans 75 residues: Toxin-like peptide AaF1CA7 (75 aa).

A signal peptide spans 1-22 (MMKLMLFSIIVILFSLIGSIHG). Residues 25–75 (VPGNYPLDSSDDTYLCAPLGENPSCIQICRKHGVKYGYCYAFQCWCEYFGR) enclose the LCN-type CS-alpha/beta domain. 3 cysteine pairs are disulfide-bonded: Cys40/Cys63, Cys49/Cys68, and Cys53/Cys70.

The protein belongs to the long (3 C-C) scorpion toxin superfamily. In terms of tissue distribution, expressed by the venom gland.

It localises to the secreted. Functionally, probable neurotoxin that inhibits ion channels. This is Toxin-like peptide AaF1CA7 from Androctonus australis (Sahara scorpion).